A 401-amino-acid polypeptide reads, in one-letter code: Imidazolonepropionase (401 aa).

Fe(3+) is bound by residues His-70 and His-72. Residues His-70 and His-72 each contribute to the Zn(2+) site. Residues Arg-79, Tyr-142, and His-175 each contribute to the 4-imidazolone-5-propanoate site. Tyr-142 is a binding site for N-formimidoyl-L-glutamate. His-238 contacts Fe(3+). Zn(2+) is bound at residue His-238. Gln-241 lines the 4-imidazolone-5-propanoate pocket. Asp-313 is a Fe(3+) binding site. Asp-313 serves as a coordination point for Zn(2+). Positions 315 and 317 each coordinate N-formimidoyl-L-glutamate. Thr-318 is a 4-imidazolone-5-propanoate binding site.

This sequence belongs to the metallo-dependent hydrolases superfamily. HutI family. Zn(2+) is required as a cofactor. The cofactor is Fe(3+).

Its subcellular location is the cytoplasm. The catalysed reaction is 4-imidazolone-5-propanoate + H2O = N-formimidoyl-L-glutamate. It functions in the pathway amino-acid degradation; L-histidine degradation into L-glutamate; N-formimidoyl-L-glutamate from L-histidine: step 3/3. In terms of biological role, catalyzes the hydrolytic cleavage of the carbon-nitrogen bond in imidazolone-5-propanoate to yield N-formimidoyl-L-glutamate. It is the third step in the universal histidine degradation pathway. The polypeptide is Imidazolonepropionase (Acidiphilium cryptum (strain JF-5)).